The following is a 26-amino-acid chain: SWCDPATLKYVSGITGCRAMVKLQCL.

The protein belongs to the protease inhibitor I6 (cereal trypsin/alpha-amylase inhibitor) family.

Its subcellular location is the secreted. Functionally, alpha-amylase inhibitor. This Saussurea costus (Costus) protein is Alpha-amylase inhibitor 1.